The chain runs to 300 residues: MGSTRKGMLNVLIAAVLWGSSGVCAQYIMEQSRMSSQFLTMIRLLFAGLILVTFSFMHGDKIFSILKNRKDALSLLIFSVVGALTVQLTFLLTIEKSNAATATVLQFLSPTIIVAWFALARRTRPGILVLTAILTSLIGTFLLVTHGNPTSLSISSAALFWGIASAFAAAFYTTWPSRLIAQYGTLPVVGWSMSFGGLILLPFYAKEGTHFAVSGSLILAFFYLVVIGTSLTFSLYLKGAQLIGGPKASILSCAEPLSSALLSLLLLGISFTLPDWLGTLLILSSVILISLDSRRRARAA.

The Periplasmic portion of the chain corresponds to 1–7 (MGSTRKG). A helical membrane pass occupies residues 8–28 (MLNVLIAAVLWGSSGVCAQYI). The 130-residue stretch at 16-145 (VLWGSSGVCA…SLIGTFLLVT (130 aa)) folds into the EamA 1 domain. Over 29–45 (MEQSRMSSQFLTMIRLL) the chain is Cytoplasmic. The chain crosses the membrane as a helical span at residues 46–66 (FAGLILVTFSFMHGDKIFSIL). Residues 67 to 71 (KNRKD) are Periplasmic-facing. A helical membrane pass occupies residues 72–92 (ALSLLIFSVVGALTVQLTFLL). Topologically, residues 93-99 (TIEKSNA) are cytoplasmic. A helical membrane pass occupies residues 100–120 (ATATVLQFLSPTIIVAWFALA). Over 121–124 (RRTR) the chain is Periplasmic. A helical membrane pass occupies residues 125–145 (PGILVLTAILTSLIGTFLLVT). The Cytoplasmic segment spans residues 146–151 (HGNPTS). Residues 152 to 172 (LSISSAALFWGIASAFAAAFY) form a helical membrane-spanning segment. Residues 167–291 (FAAAFYTTWP…ILSSVILISL (125 aa)) enclose the EamA 2 domain. Over 173 to 184 (TTWPSRLIAQYG) the chain is Periplasmic. Residues 185 to 205 (TLPVVGWSMSFGGLILLPFYA) form a helical membrane-spanning segment. Residues 206-216 (KEGTHFAVSGS) lie on the Cytoplasmic side of the membrane. A helical membrane pass occupies residues 217 to 237 (LILAFFYLVVIGTSLTFSLYL). Topologically, residues 238 to 263 (KGAQLIGGPKASILSCAEPLSSALLS) are periplasmic. Residues 264 to 284 (LLLLGISFTLPDWLGTLLILS) form a helical membrane-spanning segment. The Cytoplasmic portion of the chain corresponds to 285–300 (SVILISLDSRRRARAA).

It belongs to the EamA transporter family.

The protein localises to the cell inner membrane. This is an uncharacterized protein from Salmonella typhimurium (strain LT2 / SGSC1412 / ATCC 700720).